We begin with the raw amino-acid sequence, 461 residues long: Ribulose bisphosphate carboxylase (461 aa).

A substrate-binding site is contributed by Asn-112. Lys-167 (proton acceptor) is an active-site residue. Residue Lys-169 coordinates substrate. Mg(2+) is bound by residues Lys-192, Asp-194, and Glu-195. Lys-192 bears the N6-carboxylysine mark. His-288 serves as the catalytic Proton acceptor. Arg-289, His-322, and Ser-369 together coordinate substrate.

The protein belongs to the RuBisCO large chain family. Type II subfamily. In terms of assembly, homodimer. It depends on Mg(2+) as a cofactor.

The enzyme catalyses 2 (2R)-3-phosphoglycerate + 2 H(+) = D-ribulose 1,5-bisphosphate + CO2 + H2O. It catalyses the reaction D-ribulose 1,5-bisphosphate + O2 = 2-phosphoglycolate + (2R)-3-phosphoglycerate + 2 H(+). Its function is as follows. RuBisCO catalyzes two reactions: the carboxylation of D-ribulose 1,5-bisphosphate, the primary event in carbon dioxide fixation, as well as the oxidative fragmentation of the pentose substrate. Both reactions occur simultaneously and in competition at the same active site. The chain is Ribulose bisphosphate carboxylase from Rhodopseudomonas palustris (strain ATCC BAA-98 / CGA009).